Here is a 381-residue protein sequence, read N- to C-terminus: MPFSNSHNTLKLRFPAEDEFPDLSGHNNHMAKVLTPELYAELRAKSTPSGFTLDDVIQAGVDNPGHPYIMTVGCVAGDEESYDVFKELFDPIIEDRHGGYKPSDEHKTDLNPDNLQGGDDLDPNYVLSSRVRTGRSIRGFCLPPHCSRGERRAIEKLAVEALSSLDGDLAGRYYALKSMTEAEQQQLIDDHFLFDKPVSPLLLASGMARDWPDARGIWHNDNKTFLVWINEEDHLRVISMQKGGNMKEVFTRFCNGLTQIETLFKSKNYEFMWNPHLGYILTCPSNLGTGLRAGVHIKLPHLGKHEKFPEVLKRLRLQKRGTGGVDTAAVGGVFDVSNADRLGFSEVELVQMVVDGVKLLIEMEQRLEQGQAIDDLVPAQK.

The residue at position 4 (Ser-4) is a Phosphoserine. Positions 11–98 (KLRFPAEDEF…FDPIIEDRHG (88 aa)) constitute a Phosphagen kinase N-terminal domain. Thr-35 carries the phosphothreonine modification. A Glycyl lysine isopeptide (Lys-Gly) (interchain with G-Cter in ubiquitin) cross-link involves residue Lys-45. Val-72 is a creatine binding site. Basic and acidic residues predominate over residues 96 to 110 (RHGGYKPSDEHKTDL). The tract at residues 96–123 (RHGGYKPSDEHKTDLNPDNLQGGDDLDP) is disordered. Residues Lys-101 and Lys-107 each participate in a glycyl lysine isopeptide (Lys-Gly) (interchain with G-Cter in ubiquitin) cross-link. Tyr-125 bears the Phosphotyrosine mark. A Phosphagen kinase C-terminal domain is found at 125–367 (YVLSSRVRTG…KLLIEMEQRL (243 aa)). ATP contacts are provided by residues 128–132 (SSRVR), Arg-130, Arg-132, and His-191. An internal MTS-like signal region spans residues 130-138 (RVRTGRSIR). Ser-199 carries the phosphoserine modification. Glu-232 contributes to the creatine binding site. Arg-236 lines the ATP pocket. Tyr-269 is subject to 3'-nitrotyrosine. Position 285 (Ser-285) interacts with creatine. ATP-binding positions include Arg-292, 292 to 296 (RAGVH), Arg-320, 320 to 325 (RGTGGV), and Asp-335. Thr-322 is modified (phosphothreonine). A Glycyl lysine isopeptide (Lys-Gly) (interchain with G-Cter in ubiquitin) cross-link involves residue Lys-381.

This sequence belongs to the ATP:guanido phosphotransferase family. In terms of assembly, dimer of identical or non-identical chains, which can be either B (brain type) or M (muscle type). With MM being the major form in skeletal muscle and myocardium, MB existing in myocardium, and BB existing in many tissues, especially brain. Interacts with SLC12A6 (via C-terminus); the interaction may be required for SLC12A6 potassium-chloride cotransport activity. In terms of processing, ubiquitinated by the ECS(ASB9) complex, leading to its degradation by the proteasome.

The protein resides in the cytoplasm. Its subcellular location is the cytosol. It localises to the mitochondrion. It is found in the cell membrane. It catalyses the reaction creatine + ATP = N-phosphocreatine + ADP + H(+). Reversibly catalyzes the transfer of phosphate between ATP and various phosphogens (e.g. creatine phosphate). Creatine kinase isoenzymes play a central role in energy transduction in tissues with large, fluctuating energy demands, such as skeletal muscle, heart, brain and spermatozoa. Acts as a key regulator of adaptive thermogenesis as part of the futile creatine cycle: localizes to the mitochondria of thermogenic fat cells and acts by mediating phosphorylation of creatine to initiate a futile cycle of creatine phosphorylation and dephosphorylation. During the futile creatine cycle, creatine and N-phosphocreatine are in a futile cycle, which dissipates the high energy charge of N-phosphocreatine as heat without performing any mechanical or chemical work. The chain is Creatine kinase B-type (CKB) from Sus scrofa (Pig).